The following is a 290-amino-acid chain: MLGEIRLKNIFFILIGAAIFSFGLVHFNMQNNLAEGGFTGITLLLYALFHISPSISNLVLNIPIFFIGWRLLGRTMFVYTLVGTVALSLFLSIFQRYEIHMPLQHDLALAALFAGVFIGAGLGIIFKFGGTTGGVDIIARLVNKYFGIPMGRTMFAFDACVIILSLLTYLSYKEAMYTLVAVFVAARLIDFIQEGGYAAKGATIISSKNDLIQKKILEEMERGVTILKGQGSYTKEDIDVLYCVVPKNELVMLKSVINSIDPHAFVAVSDVHDVLGEGFTLDENKNPLPR.

6 helical membrane passes run 9 to 29 (NIFFILIGAAIFSFGLVHFNM), 47 to 67 (ALFHISPSISNLVLNIPIFFI), 75 to 95 (TMFVYTLVGTVALSLFLSIFQ), 106 to 126 (DLALAALFAGVFIGAGLGIIF), 146 to 166 (FGIPMGRTMFAFDACVIILSL), and 179 to 199 (LVAVFVAARLIDFIQEGGYAA).

It belongs to the UPF0750 family.

It localises to the cell membrane. This is UPF0750 membrane protein YpjC (ypjC) from Bacillus subtilis (strain 168).